The chain runs to 219 residues: Thiopurine S-methyltransferase (219 aa).

S-adenosyl-L-methionine-binding residues include W10, L45, E66, and R123.

This sequence belongs to the class I-like SAM-binding methyltransferase superfamily. TPMT family.

The protein resides in the cytoplasm. It catalyses the reaction S-adenosyl-L-methionine + a thiopurine = S-adenosyl-L-homocysteine + a thiopurine S-methylether.. This Bordetella pertussis (strain Tohama I / ATCC BAA-589 / NCTC 13251) protein is Thiopurine S-methyltransferase.